A 91-amino-acid chain; its full sequence is Putative septation protein SpoVG (91 aa).

It belongs to the SpoVG family.

Its function is as follows. Could be involved in septation. The sequence is that of Putative septation protein SpoVG from Clostridium botulinum (strain Alaska E43 / Type E3).